A 305-amino-acid polypeptide reads, in one-letter code: Acetylglutamate kinase (305 aa).

Substrate-binding positions include glycine 78–glycine 79, arginine 100, and asparagine 202.

This sequence belongs to the acetylglutamate kinase family. ArgB subfamily.

It localises to the cytoplasm. The catalysed reaction is N-acetyl-L-glutamate + ATP = N-acetyl-L-glutamyl 5-phosphate + ADP. The protein operates within amino-acid biosynthesis; L-arginine biosynthesis; N(2)-acetyl-L-ornithine from L-glutamate: step 2/4. Its function is as follows. Catalyzes the ATP-dependent phosphorylation of N-acetyl-L-glutamate. The protein is Acetylglutamate kinase of Polaromonas sp. (strain JS666 / ATCC BAA-500).